A 204-amino-acid polypeptide reads, in one-letter code: Ribosome maturation factor RimP (204 aa).

This sequence belongs to the RimP family.

The protein resides in the cytoplasm. Its function is as follows. Required for maturation of 30S ribosomal subunits. The polypeptide is Ribosome maturation factor RimP (Albidiferax ferrireducens (strain ATCC BAA-621 / DSM 15236 / T118) (Rhodoferax ferrireducens)).